A 261-amino-acid chain; its full sequence is Putative hydro-lyase Sfum_3393 (261 aa).

The protein belongs to the D-glutamate cyclase family.

In Syntrophobacter fumaroxidans (strain DSM 10017 / MPOB), this protein is Putative hydro-lyase Sfum_3393.